Consider the following 776-residue polypeptide: Endonuclease MutS2 (776 aa).

328 to 335 (GPNTGGKT) is an ATP binding site. The Smr domain maps to 701 to 776 (LDLRGKRYEE…GSGATIVTFK (76 aa)).

This sequence belongs to the DNA mismatch repair MutS family. MutS2 subfamily. Homodimer. Binds to stalled ribosomes, contacting rRNA.

In terms of biological role, endonuclease that is involved in the suppression of homologous recombination and thus may have a key role in the control of bacterial genetic diversity. Its function is as follows. Acts as a ribosome collision sensor, splitting the ribosome into its 2 subunits. Detects stalled/collided 70S ribosomes which it binds and splits by an ATP-hydrolysis driven conformational change. Acts upstream of the ribosome quality control system (RQC), a ribosome-associated complex that mediates the extraction of incompletely synthesized nascent chains from stalled ribosomes and their subsequent degradation. Probably generates substrates for RQC. The sequence is that of Endonuclease MutS2 from Streptococcus mutans serotype c (strain ATCC 700610 / UA159).